The following is a 182-amino-acid chain: Ribosome-recycling factor (182 aa).

This sequence belongs to the RRF family.

The protein localises to the cytoplasm. Responsible for the release of ribosomes from messenger RNA at the termination of protein biosynthesis. May increase the efficiency of translation by recycling ribosomes from one round of translation to another. The protein is Ribosome-recycling factor of Nostoc sp. (strain PCC 7120 / SAG 25.82 / UTEX 2576).